The chain runs to 397 residues: Argininosuccinate synthase (397 aa).

Ala-9 to Ser-17 lines the ATP pocket. Tyr-86 serves as a coordination point for L-citrulline. Gly-116 provides a ligand contact to ATP. L-aspartate-binding residues include Thr-118, Asn-122, and Asp-123. Residue Asn-122 participates in L-citrulline binding. 4 residues coordinate L-citrulline: Arg-126, Ser-174, Glu-259, and Tyr-271.

It belongs to the argininosuccinate synthase family. Type 1 subfamily. Homotetramer.

It is found in the cytoplasm. It catalyses the reaction L-citrulline + L-aspartate + ATP = 2-(N(omega)-L-arginino)succinate + AMP + diphosphate + H(+). It functions in the pathway amino-acid biosynthesis; L-arginine biosynthesis; L-arginine from L-ornithine and carbamoyl phosphate: step 2/3. In Lactococcus lactis subsp. cremoris (strain MG1363), this protein is Argininosuccinate synthase.